A 265-amino-acid polypeptide reads, in one-letter code: Tryptophan synthase alpha chain (265 aa).

Active-site proton acceptor residues include Glu49 and Asp60.

It belongs to the TrpA family. As to quaternary structure, tetramer of two alpha and two beta chains.

The enzyme catalyses (1S,2R)-1-C-(indol-3-yl)glycerol 3-phosphate + L-serine = D-glyceraldehyde 3-phosphate + L-tryptophan + H2O. Its pathway is amino-acid biosynthesis; L-tryptophan biosynthesis; L-tryptophan from chorismate: step 5/5. In terms of biological role, the alpha subunit is responsible for the aldol cleavage of indoleglycerol phosphate to indole and glyceraldehyde 3-phosphate. The polypeptide is Tryptophan synthase alpha chain (Desulfatibacillum aliphaticivorans).